The sequence spans 502 residues: Hexose transporter 1 (502 aa).

Residues 1–26 are Cytoplasmic-facing; sequence MKKSSKEISSSQSLKNGGSDHFFNTS. A helical membrane pass occupies residues 27–47; the sequence is LMYVLAACLASFIFGYQVSVL. Residues 48–76 are Extracellular-facing; that stretch reads NTIKNFIVIEFGWCTGNKVECDDSTLKSS. Cysteines 61 and 68 form a disulfide. A helical membrane pass occupies residues 77 to 97; the sequence is FLLASVFIGAVVGSGFSGYLV. Topologically, residues 98–102 are cytoplasmic; that stretch reads QHGRR. A helical membrane pass occupies residues 103 to 123; the sequence is FSLLVIYNFFILVSILTSITH. Topologically, residues 124-132 are extracellular; it reads HFHTILFSR. A helical membrane pass occupies residues 133-153; that stretch reads LLSGFGIGLITVSVPMYISEM. Residues 154–163 lie on the Cytoplasmic side of the membrane; that stretch reads THKDKKGAYG. Residues 164–184 traverse the membrane as a helical segment; sequence VLHQLFITFGIFVAVLLGMAM. Gln167 is a binding site for alpha-D-glucose. A beta-D-glucose-binding site is contributed by Gln167. Topologically, residues 185-205 are extracellular; sequence GEAPDAKSVDALGEFQKIWWR. The helical transmembrane segment at 206–226 threads the bilayer; that stretch reads LMFFFPCLISILGIVLLTFFY. Topologically, residues 227–291 are cytoplasmic; sequence KEETPYYLFE…RAMQIPSYRN (65 aa). A helical membrane pass occupies residues 292–312; sequence VILLGCILSGLQQFTGINVLV. Alpha-D-glucose-binding residues include Gln303, Gln304, and Asn309. Residue Gln303 coordinates beta-D-glucose. Residue Asn309 participates in beta-D-glucose binding. Topologically, residues 313 to 329 are extracellular; that stretch reads SNSNELYKEFLSNKLIT. The helical transmembrane segment at 330–350 threads the bilayer; sequence TLSVIMTVVNFLMTFPAIYIV. Asn339 provides a ligand contact to beta-D-glucose. Over 351–356 the chain is Cytoplasmic; that stretch reads EKLGRK. A helical membrane pass occupies residues 357-377; it reads TLLLCGCAGVICAFLPTAIAN. At 378–390 the chain is on the extracellular side; that stretch reads QIDSTSAFVKNLS. Residues 391-411 traverse the membrane as a helical segment; it reads IAATFVMIISFAVSYGPVLWI. An alpha-D-glucose-binding site is contributed by Trp410. Residues 412 to 427 are Cytoplasmic-facing; that stretch reads YLHEMFPSEIKDSAAS. A helical membrane pass occupies residues 428 to 448; that stretch reads LASLVNWVCAIIVVFPSDIII. At 449–453 the chain is on the extracellular side; that stretch reads KKSPT. The helical transmembrane segment at 454–474 threads the bilayer; sequence ILFFIFSGMSILSFLFIFFFI. Topologically, residues 475–502 are cytoplasmic; that stretch reads KETKGGEIGTSPYITMEERQKHMGKSAV.

Belongs to the major facilitator superfamily. Sugar transporter (TC 2.A.1.1) family. In terms of assembly, homodimer.

The protein localises to the cell membrane. The enzyme catalyses D-glucose(out) = D-glucose(in). It catalyses the reaction D-fructose(out) = D-fructose(in). It carries out the reaction D-galactose(in) = D-galactose(out). The catalysed reaction is D-mannose(out) = D-mannose(in). The enzyme catalyses D-glucosamine(out) = D-glucosamine(in). It catalyses the reaction D-xylose(out) = D-xylose(in). Inhibited by compound 3361 (3-O-((undec-10-en)-1-yl)-D-glucose). Functionally, sodium-independent facilitative hexose transporter. Can transport D-glucose and D-fructose. Can transport D-mannose, D-galactose, D-xylose and D-glucosamine. The polypeptide is Hexose transporter 1 (Plasmodium vivax (strain Brazil I)).